The sequence spans 532 residues: Optineurin (532 aa).

2 coiled-coil regions span residues 27-143 and 195-466; these read SMKN…LKLG and EEVA…EEMM. The segment at 502–532 adopts a CCHC NOA-type zinc-finger fold; it reads QPSITVYTCPKCNLTVPDMDTLQIHVMDCIT. Positions 510, 513, 526, and 530 each coordinate Zn(2+).

Its subcellular location is the cytoplasm. It is found in the perinuclear region. The protein resides in the golgi apparatus. It localises to the trans-Golgi network. The protein localises to the cytoplasmic vesicle. Its subcellular location is the recycling endosome. It is found in the autophagosome. Probably part of the TNF-alpha signaling pathway that can shift the equilibrium toward induction of cell death. May act by regulating membrane trafficking and cellular morphogenesis. The protein is Optineurin (optn) of Xenopus laevis (African clawed frog).